The sequence spans 311 residues: Delta(1)-pyrroline-2-carboxylate/Delta(1)-piperideine-2-carboxylate reductase (311 aa).

The protein belongs to the ornithine cyclodeaminase/mu-crystallin family. Homodimer.

It catalyses the reaction L-pipecolate + NAD(+) = Delta(1)-piperideine-2-carboxylate + NADH + H(+). The enzyme catalyses L-pipecolate + NADP(+) = Delta(1)-piperideine-2-carboxylate + NADPH + H(+). The catalysed reaction is L-proline + NAD(+) = 1-pyrroline-2-carboxylate + NADH + H(+). It carries out the reaction L-proline + NADP(+) = 1-pyrroline-2-carboxylate + NADPH + H(+). Its pathway is amino-acid degradation. Catalyzes the reduction of both Delta(1)-pyrroline-2-carboxylate (Pyr2C) and Delta(1)-piperideine-2-carboxylate (Pip2C) to L-proline and L-pipecolate, respectively, using NADPH or NADH as the electron donor. Can also catalyze the reverse oxidation reactions, albeit at a much lower rate. Together with LhpH, is involved in a trans-3-hydroxy-L-proline (t3LHyp) degradation pathway to L-proline, which allows A.brasilense to grow on t3LHyp as a sole carbon source. Also appears to be involved in D-proline and D-lysine metabolism. Does not show ornithine cyclodeaminase (OCD) activity. In Azospirillum brasilense, this protein is Delta(1)-pyrroline-2-carboxylate/Delta(1)-piperideine-2-carboxylate reductase.